A 296-amino-acid chain; its full sequence is Ribosomal RNA small subunit methyltransferase A (296 aa).

S-adenosyl-L-methionine contacts are provided by asparagine 32, leucine 34, glycine 59, glutamate 80, aspartate 105, and asparagine 130.

It belongs to the class I-like SAM-binding methyltransferase superfamily. rRNA adenine N(6)-methyltransferase family. RsmA subfamily.

The protein resides in the cytoplasm. The catalysed reaction is adenosine(1518)/adenosine(1519) in 16S rRNA + 4 S-adenosyl-L-methionine = N(6)-dimethyladenosine(1518)/N(6)-dimethyladenosine(1519) in 16S rRNA + 4 S-adenosyl-L-homocysteine + 4 H(+). In terms of biological role, specifically dimethylates two adjacent adenosines (A1518 and A1519) in the loop of a conserved hairpin near the 3'-end of 16S rRNA in the 30S particle. May play a critical role in biogenesis of 30S subunits. The polypeptide is Ribosomal RNA small subunit methyltransferase A (Ligilactobacillus salivarius (strain UCC118) (Lactobacillus salivarius)).